The chain runs to 142 residues: Deoxyuridine 5'-triphosphate nucleotidohydrolase (142 aa).

Residues 62 to 64, N75, 79 to 81, and K89 each bind substrate; these read RSG and TID.

The protein belongs to the dUTPase family. Requires Mg(2+) as cofactor.

The enzyme catalyses dUTP + H2O = dUMP + diphosphate + H(+). Its pathway is pyrimidine metabolism; dUMP biosynthesis; dUMP from dCTP (dUTP route): step 2/2. Functionally, this enzyme is involved in nucleotide metabolism: it produces dUMP, the immediate precursor of thymidine nucleotides and it decreases the intracellular concentration of dUTP so that uracil cannot be incorporated into DNA. In Nautilia profundicola (strain ATCC BAA-1463 / DSM 18972 / AmH), this protein is Deoxyuridine 5'-triphosphate nucleotidohydrolase.